The following is a 375-amino-acid chain: E3 ubiquitin-protein ligase RHF2A (375 aa).

Residues 33–74 (CSICLESFCESDPSTLTSCKHEYHLQCILEWCQRSSQCPMCW) form an RING-type; atypical zinc finger. Residues 146-159 (RARHGVRREGHRSR) show a composition bias toward basic residues. Disordered stretches follow at residues 146-165 (RARHGVRREGHRSRSSSQGH), 172-262 (SSQP…SESL), and 318-375 (ERLE…SGSS). The span at 178-188 (SSPPPHPPMPS) shows a compositional bias: pro residues. Polar residues-rich tracts occupy residues 211–245 (SHQSNTQPPTSSHPRQVSPSASDSNSRPLNQSSPS) and 327–336 (RPSTASVSDV). Over residues 337-365 (SENHTPETNNEHNRAAAGDEHSVNERGVK) the composition is skewed to basic and acidic residues.

The catalysed reaction is S-ubiquitinyl-[E2 ubiquitin-conjugating enzyme]-L-cysteine + [acceptor protein]-L-lysine = [E2 ubiquitin-conjugating enzyme]-L-cysteine + N(6)-ubiquitinyl-[acceptor protein]-L-lysine.. It participates in protein modification; protein ubiquitination. Its function is as follows. E3 ubiquitin-protein ligase involved in the positive regulation of the gametogenesis progression. Required for the degradation of KRP6, a cyclin-dependent kinase inhibitor which accumulates during meiosis and blocks the progression of subsequent mitoses during gametophytes development. Functions in association with RHF1A. In Arabidopsis thaliana (Mouse-ear cress), this protein is E3 ubiquitin-protein ligase RHF2A.